A 495-amino-acid chain; its full sequence is UDP-glycosyltransferase 73C9 (495 aa).

23–26 contacts UDP-alpha-D-glucose; the sequence is GHMI. His-24 functions as the Proton acceptor in the catalytic mechanism. Residue Asp-129 is the Charge relay of the active site. UDP-alpha-D-glucose-binding positions include 355 to 358, 373 to 381, and 397 to 398; these read WSPQ, HCGWNSTLE, and DQ.

The protein belongs to the UDP-glycosyltransferase family.

Possesses very weak glucosyltransferase activity toward 2,4,5-trichlorophenol (TCP), when assayed with high concentrations of TCP. The sequence is that of UDP-glycosyltransferase 73C9 from Barbarea vulgaris (Yellow rocket).